A 167-amino-acid chain; its full sequence is UPF0262 protein Nwi_0248 (167 aa).

The protein belongs to the UPF0262 family.

The polypeptide is UPF0262 protein Nwi_0248 (Nitrobacter winogradskyi (strain ATCC 25391 / DSM 10237 / CIP 104748 / NCIMB 11846 / Nb-255)).